Reading from the N-terminus, the 916-residue chain is DNA repair endonuclease XPF (916 aa).

The tract at residues 1–457 (MESGQPARRI…EVWMKFRKED (457 aa)) is helicase-like. Leucine-zipper regions lie at residues 233 to 254 (LNAC…DLSL) and 270 to 298 (LDPL…LQYL). Lys289 is modified (N6-acetyllysine). The disordered stretch occupies residues 460 to 487 (KRIRKSHKRPKDPQNKERASTKERTLKK). Basic and acidic residues predominate over residues 470–483 (KDPQNKERASTKER). Residues 486–491 (KKKKRK) carry the Nuclear localization signal motif. Lys500 is covalently cross-linked (Glycyl lysine isopeptide (Lys-Gly) (interchain with G-Cter in SUMO2)). Disordered stretches follow at residues 502–526 (EELE…ESCP) and 660–679 (TASA…EQNG). Ser521 bears the Phosphoserine mark. Residues 658-813 (RGTASADVST…PSPHATAELF (156 aa)) form a nuclease region. The ERCC4 domain maps to 683–763 (SIVVDMREFR…RPVLLIEFDP (81 aa)). Position 764 is a phosphoserine (Ser764). A hhH2, dimerization with ERCC1 region spans residues 837–905 (TLPESEKYNP…QLYDFIHTSF (69 aa)). Lys911 is subject to N6-acetyllysine.

Belongs to the XPF family. Heterodimer composed of ERCC1 and ERCC4/XPF. Interacts with SLX4/BTBD12; this interaction is direct and links the ERCC1-ERCC4/XPF complex to SLX4, which may coordinate the action of the structure-specific endonuclease during DNA repair. It depends on Mg(2+) as a cofactor. In terms of processing, acetylation at Lys-911 by KAT5 promotes interaction with ERCC1 by disrupting a salt bridge between Glu-907 and Lys-911, thereby exposing a second binding site for ERCC1. Deacetylated by SIRT1.

Its subcellular location is the nucleus. The protein localises to the chromosome. Catalytic component of a structure-specific DNA repair endonuclease responsible for the 5-prime incision during DNA repair, and which is essential for nucleotide excision repair (NER) and interstrand cross-link (ICL) repair. The protein is DNA repair endonuclease XPF of Homo sapiens (Human).